The primary structure comprises 186 residues: Large ribosomal subunit protein uL5 (186 aa).

The protein belongs to the universal ribosomal protein uL5 family. As to quaternary structure, part of the 50S ribosomal subunit; contacts the 5S rRNA and probably tRNA. Forms a bridge to the 30S subunit in the 70S ribosome.

In terms of biological role, this is one of the proteins that bind and probably mediate the attachment of the 5S RNA into the large ribosomal subunit, where it forms part of the central protuberance. In the 70S ribosome it contacts protein S13 of the 30S subunit (bridge B1b), connecting the 2 subunits; this bridge is implicated in subunit movement. May contact the P site tRNA; the 5S rRNA and some of its associated proteins might help stabilize positioning of ribosome-bound tRNAs. The polypeptide is Large ribosomal subunit protein uL5 (Methanopyrus kandleri (strain AV19 / DSM 6324 / JCM 9639 / NBRC 100938)).